The following is a 432-amino-acid chain: MQLLTIGINHHTAPVALRERVAFPLEQIKPALVTFKNVFLGPQAPNAPEAAILSTCNRTELYCATDDRAARDAAIRWLSDYHRIPVDELAPHVYALPQSEAVRHAFRVASGLDSMVLGETQILGQMKDAVRTASEAGALGTYLNQLFQRTFAVAKEVRGTTEIGAQSVSMAAAAVRLAQRIFEKVSDQRVLFIGAGEMIELCATHFAAQGPRELVVANRTAERGQRLAERFNGRAMPLSDLPARMQEFDIIVSCTASTLPIIGLGAVERAVKARRHRPIFMVDLAVPRDIEPEVSKLKDVFLYTVDDLGAIVREGNASRQAAVAQAEAIIETRVQNFMQWLDTRSVVPVIRHMHTQADALRRLEVEKAQKMLARGDDPAAVLEALSQALTNKLIHGPTSALNRVNGADRDSLIELMRGFYQHAPRSNDQSGH.

Substrate is bound by residues 55 to 58 (TCNR), serine 114, 119 to 121 (ETQ), and glutamine 125. Cysteine 56 serves as the catalytic Nucleophile. NADP(+) is bound at residue 194 to 199 (GAGEMI).

The protein belongs to the glutamyl-tRNA reductase family. As to quaternary structure, homodimer.

It catalyses the reaction (S)-4-amino-5-oxopentanoate + tRNA(Glu) + NADP(+) = L-glutamyl-tRNA(Glu) + NADPH + H(+). It participates in porphyrin-containing compound metabolism; protoporphyrin-IX biosynthesis; 5-aminolevulinate from L-glutamyl-tRNA(Glu): step 1/2. Its function is as follows. Catalyzes the NADPH-dependent reduction of glutamyl-tRNA(Glu) to glutamate 1-semialdehyde (GSA). This is Glutamyl-tRNA reductase from Burkholderia multivorans (strain ATCC 17616 / 249).